The following is a 439-amino-acid chain: Cln5-like protein 3 (439 aa).

An N-terminal signal peptide occupies residues 1-24 (MKNMLNIILTLTIIFIGLIKISIS). N-linked (GlcNAc...) asparagine glycosylation is found at Asn93, Asn112, Asn122, Asn138, Asn168, Asn219, Asn268, Asn289, Asn304, and Asn359. A helical transmembrane segment spans residues 371–391 (IIFISIAIGFGVVIILYISIG).

The protein belongs to the CLN5 family.

The protein resides in the membrane. This chain is Cln5-like protein 3 (cln5lc), found in Dictyostelium discoideum (Social amoeba).